A 432-amino-acid polypeptide reads, in one-letter code: 3-chlorobenzoate-3,4-dioxygenase oxygenase subunit (432 aa).

One can recognise a Rieske domain in the interval tryptophan 27–valine 133. Residues cysteine 69, histidine 71, cysteine 88, and histidine 91 each contribute to the [2Fe-2S] cluster site. Fe cation-binding residues include histidine 180 and histidine 185.

The protein belongs to the bacterial ring-hydroxylating dioxygenase alpha subunit family. This dioxygenase system consists of two proteins: an oxygenase and an oxygenase reductase. [2Fe-2S] cluster serves as cofactor. It depends on Fe cation as a cofactor.

This is 3-chlorobenzoate-3,4-dioxygenase oxygenase subunit (cbaA) from Comamonas testosteroni (Pseudomonas testosteroni).